The following is a 97-amino-acid chain: Protein CYSTEINE-RICH TRANSMEMBRANE MODULE 7 (97 aa).

The disordered stretch occupies residues 1–27 (MASYHVSHDSYQSPGPSPLYQPIIEAP). Pro residues predominate over residues 15–27 (GPSPLYQPIIEAP). A helical transmembrane segment spans residues 68–88 (YVGCFPFLRSCLTTLCCCWFV).

This sequence belongs to the CYSTM1 family. Homodimer and heterodimers. Interacts with CYSTM3, CYSTM4, CYSTM5, CYSTM6, CYSTM10, WIH1/CYSTM13 and CYSTM11. Binds weakly to CYSTM1, CYSTM2 and CYSTM12. In terms of tissue distribution, mostly expressed in siliques and, to a lower extent, in stems, roots, leaves and flowers.

It localises to the cell membrane. Functionally, involved in resistance to abiotic stress. The sequence is that of Protein CYSTEINE-RICH TRANSMEMBRANE MODULE 7 from Arabidopsis thaliana (Mouse-ear cress).